We begin with the raw amino-acid sequence, 275 residues long: Chemotaxis protein methyltransferase Cher2 (275 aa).

The 275-residue stretch at 1–275 (MSTGNLDFEQ…CSPGIIYQAK (275 aa)) folds into the CheR-type methyltransferase domain. Residues N73, T75, R79, E116, D145, 201 to 202 (NL), and 218 to 219 (RN) each bind S-adenosyl-L-methionine.

As to quaternary structure, monomer.

It catalyses the reaction L-glutamyl-[protein] + S-adenosyl-L-methionine = [protein]-L-glutamate 5-O-methyl ester + S-adenosyl-L-homocysteine. Functionally, methylation of the membrane-bound methyl-accepting chemotaxis proteins (MCP) to form gamma-glutamyl methyl ester residues in MCP. Methylates the McpS chemotaxis receptor. The protein is Chemotaxis protein methyltransferase Cher2 (cheR2) of Pseudomonas putida (strain ATCC 47054 / DSM 6125 / CFBP 8728 / NCIMB 11950 / KT2440).